A 346-amino-acid chain; its full sequence is Putative serine/threonine-protein kinase K06H7.1 (346 aa).

The 268-residue stretch at 20–287 folds into the Protein kinase domain; it reads YKVVQKLGEG…KLFKLLEDVM (268 aa). ATP-binding positions include 26–34 and Lys50; that span reads LGEGGCGSV. Residue Asp141 is the Proton acceptor of the active site. Positions 302–326 are disordered; it reads PEKKKNPASQGNKFGLGKKGTKESG.

The protein belongs to the protein kinase superfamily. Ser/Thr protein kinase family.

The enzyme catalyses L-seryl-[protein] + ATP = O-phospho-L-seryl-[protein] + ADP + H(+). The catalysed reaction is L-threonyl-[protein] + ATP = O-phospho-L-threonyl-[protein] + ADP + H(+). In Caenorhabditis elegans, this protein is Putative serine/threonine-protein kinase K06H7.1.